A 121-amino-acid polypeptide reads, in one-letter code: Cytochrome B5-like protein (121 aa).

The helical transmembrane segment at Met1–Gly21 threads the bilayer. Residues Arg24–Tyr49 are disordered. The span at Thr26–Ser36 shows a compositional bias: basic and acidic residues. Positions Pro46 to His121 constitute a Cytochrome b5 heme-binding domain. His81 and His104 together coordinate heme.

This sequence belongs to the cytochrome b5 family.

It is found in the membrane. This Arabidopsis thaliana (Mouse-ear cress) protein is Cytochrome B5-like protein.